The sequence spans 179 residues: Ribosomal-protein-serine acetyltransferase (179 aa).

The N-acetyltransferase domain maps to 11-172; that stretch reads LELHAVAENH…NDAYDDVNLY (162 aa).

Belongs to the acetyltransferase family. RimL subfamily.

The protein localises to the cytoplasm. It carries out the reaction N-terminal L-seryl-[ribosomal protein bL12] + acetyl-CoA = N-terminal N(alpha)-acetyl-L-seryl-[ribosomal protein bL12] + CoA + H(+). Its function is as follows. This enzyme acetylates the N-terminal serine of ribosomal protein bL12, converting it into the acetylated form of bL12 known as bL7. The polypeptide is Ribosomal-protein-serine acetyltransferase (Escherichia coli (strain K12)).